The sequence spans 420 residues: MDVENGEGQVQVHLKTKQEHYAVPDVPYAIDGTVTTVELNTFVNALLRQKDGSSDTDFDFLVFDEYLRGRLCDHLREKAISFEDAIEIEYVERFPAPEPQDCLLHDDWVSAVKASGKWILSGCYDNTLNLWTNKGKHILTISGHTAPIKAVDWISLDEETGRFVSTSQDQTAMLWQWNVGSNSVECVSVCKGHERGVDSVSVSPDGLRFATGSWDTMLKVWSAEQEDAAEGSSKRMKESGVRTPKITLQGHRESVSAVQWMDASTLLTGSWDHTLKVWDLSLEGIKTEISTNKSIFDASYSKLNRLILTASADKNLRLYDPRTNQGSVVRNTYLGHNAWVQTVMWSTTEEFLFVSGAYDNQNKLWDCRSPKAPLYDLLGHGEKVLDIDWSNPKYIVSGGVDNTVRVFKSRKALAEDTEAK.

The ubiquitin-like (UBL) domain stretch occupies residues valine 10–glutamate 92. WD repeat units lie at residues leucine 104–serine 142, glycine 143–glutamate 185, glycine 192–glycine 231, glycine 250–glutamate 288, serine 290–valine 329, glycine 335–tyrosine 375, and glycine 379–threonine 417.

Belongs to the WD repeat WDR12/YTM1 family.

The protein resides in the nucleus. The protein localises to the nucleolus. Its subcellular location is the nucleoplasm. Functionally, required for maturation of ribosomal RNAs and formation of the large ribosomal subunit. The protein is Ribosome biogenesis protein WDR12 homolog of Drosophila erecta (Fruit fly).